The sequence spans 100 residues: Urease subunit gamma (100 aa).

Belongs to the urease gamma subunit family. As to quaternary structure, heterotrimer of UreA (gamma), UreB (beta) and UreC (alpha) subunits. Three heterotrimers associate to form the active enzyme.

The protein localises to the cytoplasm. It carries out the reaction urea + 2 H2O + H(+) = hydrogencarbonate + 2 NH4(+). It functions in the pathway nitrogen metabolism; urea degradation; CO(2) and NH(3) from urea (urease route): step 1/1. The polypeptide is Urease subunit gamma (Acinetobacter baylyi (strain ATCC 33305 / BD413 / ADP1)).